Reading from the N-terminus, the 464-residue chain is ATP synthase subunit beta (464 aa).

An ATP-binding site is contributed by 153–160; it reads GGAGVGKT.

It belongs to the ATPase alpha/beta chains family. As to quaternary structure, F-type ATPases have 2 components, CF(1) - the catalytic core - and CF(0) - the membrane proton channel. CF(1) has five subunits: alpha(3), beta(3), gamma(1), delta(1), epsilon(1). CF(0) has three main subunits: a(1), b(2) and c(9-12). The alpha and beta chains form an alternating ring which encloses part of the gamma chain. CF(1) is attached to CF(0) by a central stalk formed by the gamma and epsilon chains, while a peripheral stalk is formed by the delta and b chains.

It is found in the cell membrane. The enzyme catalyses ATP + H2O + 4 H(+)(in) = ADP + phosphate + 5 H(+)(out). In terms of biological role, produces ATP from ADP in the presence of a proton gradient across the membrane. The catalytic sites are hosted primarily by the beta subunits. The polypeptide is ATP synthase subunit beta (Acetivibrio thermocellus (strain ATCC 27405 / DSM 1237 / JCM 9322 / NBRC 103400 / NCIMB 10682 / NRRL B-4536 / VPI 7372) (Clostridium thermocellum)).